A 542-amino-acid polypeptide reads, in one-letter code: Glucans biosynthesis protein G (542 aa).

The first 34 residues, 1–34 (MVSLLRCPSSKPYSSLICSLTLGAVVALSGVAYA), serve as a signal peptide directing secretion.

The protein belongs to the OpgD/OpgG family.

The protein localises to the periplasm. It functions in the pathway glycan metabolism; osmoregulated periplasmic glucan (OPG) biosynthesis. Involved in the biosynthesis of osmoregulated periplasmic glucans (OPGs). This Shewanella baltica (strain OS155 / ATCC BAA-1091) protein is Glucans biosynthesis protein G.